We begin with the raw amino-acid sequence, 360 residues long: MTTTLQQRESASLWEQFCQWITSTNNRLYIGWFGVIMIPTLLTATTCFIIAFIAAPPVDIDGIREPVAGSLLYGNNIISGAVVPSSNAIGLHFYPIWEAASLDEWLYNGGPYQLVIFHFLLGVFCYLGRQWELSFRLGMRPWICVAYSAPVSAATAVFLIYPIGQGSFSDGMPLGISGTFNFMFVFQAEHNILMHPFHMLGVAGVFGGSLFSAMHGSLVTSSLVRETTEIESQNYGYKFGQEEETYNIVAAHGYFGRLIFQYASFNNSRSLHFFLGAWPVIGIWFTAMGVSTMAFNLNGFNFNQSILDSQGRVIGTWADVLNRAGIGMEVMHERNAHNFPLDLASGEQAPVALIAPAING.

Transmembrane regions (helical) follow at residues 29–46, 118–133, and 142–156; these read YIGW…TATT, HFLL…QWEL, and WICV…AATA. Residue histidine 118 coordinates chlorophyll a. Tyrosine 126 lines the pheophytin a pocket. [CaMn4O5] cluster-binding residues include aspartate 170 and glutamate 189. A helical membrane pass occupies residues 197–218; it reads FHMLGVAGVFGGSLFSAMHGSL. Histidine 198 serves as a coordination point for chlorophyll a. A quinone is bound by residues histidine 215 and 264 to 265; that span reads SF. Histidine 215 is a Fe cation binding site. Histidine 272 contacts Fe cation. Residues 274 to 288 form a helical membrane-spanning segment; the sequence is FLGAWPVIGIWFTAM. Residues histidine 332, glutamate 333, aspartate 342, and alanine 344 each contribute to the [CaMn4O5] cluster site. Positions 345–360 are excised as a propeptide; that stretch reads SGEQAPVALIAPAING.

Belongs to the reaction center PufL/M/PsbA/D family. PSII is composed of 1 copy each of membrane proteins PsbA, PsbB, PsbC, PsbD, PsbE, PsbF, PsbH, PsbI, PsbJ, PsbK, PsbL, PsbM, PsbT, PsbX, PsbY, PsbZ, Psb30/Ycf12, peripheral proteins PsbO, CyanoQ (PsbQ), PsbU, PsbV and a large number of cofactors. It forms dimeric complexes. The D1/D2 heterodimer binds P680, chlorophylls that are the primary electron donor of PSII, and subsequent electron acceptors. It shares a non-heme iron and each subunit binds pheophytin, quinone, additional chlorophylls, carotenoids and lipids. D1 provides most of the ligands for the Mn4-Ca-O5 cluster of the oxygen-evolving complex (OEC). There is also a Cl(-1) ion associated with D1 and D2, which is required for oxygen evolution. The PSII complex binds additional chlorophylls, carotenoids and specific lipids. is required as a cofactor. Post-translationally, tyr-161 forms a radical intermediate that is referred to as redox-active TyrZ, YZ or Y-Z. C-terminally processed by CtpA; processing is essential to allow assembly of the oxygen-evolving complex and thus photosynthetic growth.

Its subcellular location is the cellular thylakoid membrane. The catalysed reaction is 2 a plastoquinone + 4 hnu + 2 H2O = 2 a plastoquinol + O2. In terms of biological role, photosystem II (PSII) is a light-driven water:plastoquinone oxidoreductase that uses light energy to abstract electrons from H(2)O, generating O(2) and a proton gradient subsequently used for ATP formation. It consists of a core antenna complex that captures photons, and an electron transfer chain that converts photonic excitation into a charge separation. The D1/D2 (PsbA/PsbD) reaction center heterodimer binds P680, the primary electron donor of PSII as well as several subsequent electron acceptors. This is Photosystem II protein D1 from Microcystis aeruginosa (strain NIES-843 / IAM M-2473).